The sequence spans 142 residues: Ribosome maturation factor RimP (142 aa).

This sequence belongs to the RimP family.

It localises to the cytoplasm. Its function is as follows. Required for maturation of 30S ribosomal subunits. The polypeptide is Ribosome maturation factor RimP (Aromatoleum aromaticum (strain DSM 19018 / LMG 30748 / EbN1) (Azoarcus sp. (strain EbN1))).